A 129-amino-acid polypeptide reads, in one-letter code: MFRQCAKRYASSLPPNALKPAFGPPDKVAAQKFKESLMATEKHAKDTSNMWVKISVWVALPAIALTAVNTYFVEKEHAEHREHLKHVPDSEWPRDYEFMNIRSKPFFWGDGDKTLFWNPVVNRHIEHDD.

A mitochondrion-targeting transit peptide spans 1 to 9 (MFRQCAKRY). Residues 10–43 (ASSLPPNALKPAFGPPDKVAAQKFKESLMATEKH) lie on the Mitochondrial matrix side of the membrane. Residues 44 to 71 (AKDTSNMWVKISVWVALPAIALTAVNTY) traverse the membrane as a helical segment. Topologically, residues 72–129 (FVEKEHAEHREHLKHVPDSEWPRDYEFMNIRSKPFFWGDGDKTLFWNPVVNRHIEHDD) are mitochondrial intermembrane.

The protein belongs to the cytochrome c oxidase subunit 6A family. As to quaternary structure, component of the cytochrome c oxidase (complex IV, CIV), a multisubunit enzyme composed of 12 subunits. The complex is composed of a catalytic core of 3 subunits COX1, COX2 and COX3, encoded in the mitochondrial DNA, and 9 supernumerary subunits COX4, COX5A (or COX5B), COX6, COX7, COX8, COX9, COX12, COX13 and COX26, which are encoded in the nuclear genome. The complex exists as a monomer or a dimer and forms supercomplexes (SCs) in the inner mitochondrial membrane with a dimer of ubiquinol-cytochrome c oxidoreductase (cytochrome b-c1 complex, complex III, CIII), resulting in 2 different assemblies (supercomplexes III(2)IV and III(2)IV(2)). COX13 interacts with COX1 and COX3 on the intermembrane space (IMS) and COX4 on the matrix side.

The protein localises to the mitochondrion inner membrane. It functions in the pathway energy metabolism; oxidative phosphorylation. Component of the cytochrome c oxidase, the last enzyme in the mitochondrial electron transport chain which drives oxidative phosphorylation. The respiratory chain contains 3 multisubunit complexes succinate dehydrogenase (complex II, CII), ubiquinol-cytochrome c oxidoreductase (cytochrome b-c1 complex, complex III, CIII) and cytochrome c oxidase (complex IV, CIV), that cooperate to transfer electrons derived from NADH and succinate to molecular oxygen, creating an electrochemical gradient over the inner membrane that drives transmembrane transport and the ATP synthase. Cytochrome c oxidase is the component of the respiratory chain that catalyzes the reduction of oxygen to water. Electrons originating from reduced cytochrome c in the intermembrane space (IMS) are transferred via the dinuclear copper A center (CU(A)) of COX2 and heme A of COX1 to the active site in COX1, a binuclear center (BNC) formed by heme A3 and copper B (CU(B)). The BNC reduces molecular oxygen to 2 water molecules using 4 electrons from cytochrome c in the IMS and 4 protons from the mitochondrial matrix. This chain is Cytochrome c oxidase subunit 13, mitochondrial (COX13), found in Saccharomyces cerevisiae (strain ATCC 204508 / S288c) (Baker's yeast).